Consider the following 711-residue polypeptide: DNA ligase (711 aa).

NAD(+) contacts are provided by residues 39 to 43, 88 to 89, and glutamate 119; these read DAEYD and SL. Residue lysine 121 is the N6-AMP-lysine intermediate of the active site. Positions 142, 179, 295, and 319 each coordinate NAD(+). Residues cysteine 416, cysteine 419, cysteine 434, and cysteine 440 each coordinate Zn(2+). The region spanning 630 to 711 is the BRCT domain; it reads ESVSSLAGRA…LRELLAGAGA (82 aa).

Belongs to the NAD-dependent DNA ligase family. LigA subfamily. The cofactor is Mg(2+). Mn(2+) is required as a cofactor.

It carries out the reaction NAD(+) + (deoxyribonucleotide)n-3'-hydroxyl + 5'-phospho-(deoxyribonucleotide)m = (deoxyribonucleotide)n+m + AMP + beta-nicotinamide D-nucleotide.. Its function is as follows. DNA ligase that catalyzes the formation of phosphodiester linkages between 5'-phosphoryl and 3'-hydroxyl groups in double-stranded DNA using NAD as a coenzyme and as the energy source for the reaction. It is essential for DNA replication and repair of damaged DNA. This is DNA ligase from Halorhodospira halophila (strain DSM 244 / SL1) (Ectothiorhodospira halophila (strain DSM 244 / SL1)).